The following is a 563-amino-acid chain: L-lactate permease (563 aa).

14 helical membrane passes run 14 to 34 (LLLS…ALAI), 37 to 57 (MKGY…AVLV), 73 to 93 (AVYG…LYKI), 131 to 151 (GAAG…GLGF), 157 to 177 (AGIC…GIPI), 194 to 214 (MVGR…IIIM), 220 to 240 (ALEI…VQYL), 249 to 269 (LPDV…LKWW), 304 to 324 (IFKA…WGIP), 381 to 401 (LGSA…ITAI), 419 to 439 (LPIL…SSGM), 448 to 468 (ALTG…GVFI), 506 to 526 (VTGK…VGLA), and 542 to 562 (FLLL…SWMI).

Belongs to the lactate permease family.

The protein localises to the cell membrane. Is the principal permease for the uptake of L-lactate in B.subtilis. This chain is L-lactate permease (lutP), found in Bacillus subtilis (strain 168).